A 310-amino-acid chain; its full sequence is MPKFRVSLFSLALMLAVPFAPQAVAKTAAATTASQPEIASGSAMIVDLNTNKVIYSNHPDLVRPIASISKLMTAMVVLDARLPLDEKLKVDISQTPEMKGVYSRVRLNSEISRKDMLLLALMSSENRAAASLAHHYPGGYKAFIKAMNAKAKSLGMNNTRFVEPTGLSVHNVSTARDLTKLLIASKQYPLIGQLSTTREDMATFSNPTYTLPFRNTNHLVYRDNWNIQLTKTGFTNAAGHCLVMRTVINNKPVALVVMDAFGKYTHFADASRLRTWIETGKVMPVPAAALSYKKQKAAQMAAAGQTAQND.

Positions 1–25 are cleaved as a signal peptide; the sequence is MPKFRVSLFSLALMLAVPFAPQAVA. The Acyl-ester intermediate role is filled by Ser-67. Lys-70 acts as the Proton acceptor in catalysis. Ser-124 is a catalytic residue. Position 231 (Lys-231) interacts with substrate.

It belongs to the peptidase S11 family. Pbp8 is a proteolytic product of Pbp7.

The protein localises to the periplasm. Cell wall formation. May play a specialized role in remodeling the cell wall. Specifically hydrolyzes the DD-diaminopimelate-alanine bonds in high-molecular-mass murein sacculi. The chain is D-alanyl-D-alanine endopeptidase (pbpG) from Escherichia coli (strain K12).